A 1561-amino-acid chain; its full sequence is Rho GTPase-activating protein 190 (1561 aa).

4 consecutive FF domains span residues 252 to 320 (YQES…HMKK), 365 to 419 (YLQN…YLNS), 426 to 480 (KIGW…HQDD), and 482 to 547 (IEKS…HLRF). In terms of domain architecture, pG1 pseudoGTPase spans 592-765 (SGSDRTLNLL…EPYPSNHTDL (174 aa)). The pG2 pseudoGTPase domain maps to 766 to 926 (RILCCIFCGD…LKTAWDNKYE (161 aa)). Phosphoserine is present on residues serine 973, serine 975, serine 985, serine 988, and serine 996. The segment at 1054–1074 (KIRPKGPSQTLKVGEAPSRNC) is disordered. Positions 1349-1552 (AQFGKLMITS…TMIDQFPYLF (204 aa)) constitute a Rho-GAP domain.

With respect to regulation, negatively regulated by integrin, bsk and Src/Src64B. Its function is as follows. GTPase-activating protein (GAP) for RhoA/Rho1 that plays an essential role in the stability of dorsal branches of mushroom body (MB) neurons. The MB neurons are the center for olfactory learning and memory. Acts by converting RhoA/Rho1 to an inactive GDP-bound state, leading to repress the RhoA/Rho1-Drok-MRLC signaling pathway thereby maintaining axon branch stability. This Drosophila melanogaster (Fruit fly) protein is Rho GTPase-activating protein 190 (RhoGAPp190).